The chain runs to 379 residues: Succinyl-diaminopimelate desuccinylase (379 aa).

Histidine 68 is a binding site for Zn(2+). Aspartate 70 is a catalytic residue. Aspartate 101 is a binding site for Zn(2+). The active-site Proton acceptor is the glutamate 135. Zn(2+) is bound by residues glutamate 136, glutamate 164, and histidine 350.

It belongs to the peptidase M20A family. DapE subfamily. As to quaternary structure, homodimer. The cofactor is Zn(2+). It depends on Co(2+) as a cofactor.

The catalysed reaction is N-succinyl-(2S,6S)-2,6-diaminopimelate + H2O = (2S,6S)-2,6-diaminopimelate + succinate. The protein operates within amino-acid biosynthesis; L-lysine biosynthesis via DAP pathway; LL-2,6-diaminopimelate from (S)-tetrahydrodipicolinate (succinylase route): step 3/3. Its function is as follows. Catalyzes the hydrolysis of N-succinyl-L,L-diaminopimelic acid (SDAP), forming succinate and LL-2,6-diaminopimelate (DAP), an intermediate involved in the bacterial biosynthesis of lysine and meso-diaminopimelic acid, an essential component of bacterial cell walls. The chain is Succinyl-diaminopimelate desuccinylase from Bordetella bronchiseptica (strain ATCC BAA-588 / NCTC 13252 / RB50) (Alcaligenes bronchisepticus).